The sequence spans 705 residues: Prolyl endopeptidase (705 aa).

The N-terminal stretch at 1-20 (MKYKKLSVAVAAFAFAAVSA) is a signal peptide. Catalysis depends on charge relay system residues Ser-556 and His-675.

It belongs to the peptidase S9A family. In terms of assembly, monomer.

The protein localises to the periplasm. The enzyme catalyses Hydrolysis of Pro-|-Xaa &gt;&gt; Ala-|-Xaa in oligopeptides.. Functionally, cleaves peptide bonds on the C-terminal side of prolyl residues within peptides that are up to approximately 30 amino acids long. Has an absolute requirement for an X-Pro bond in the trans configuration immediately preceding the Pro-Y scissible bond. The polypeptide is Prolyl endopeptidase (Elizabethkingia miricola (Chryseobacterium miricola)).